The chain runs to 1236 residues: ABC transporter B family member 9 (1236 aa).

The 288-residue stretch at 33–320 folds into the ABC transmembrane type-1 1 domain; that stretch reads MTVGTIAAAG…TSPSLNAFAA (288 aa). The next 6 membrane-spanning stretches (helical) occupy residues 38-58, 80-100, 158-178, 179-199, 257-277, and 288-308; these read IAAA…GQLI, FIYL…CWMV, QLLC…PLLA, GVLC…SLIM, ISGF…GLAV, and GYNG…GMSL. One can recognise an ABC transporter 1 domain in the interval 355–591; the sequence is IELKDVYFRY…PEGAYSQLVR (237 aa). 390–397 contacts ATP; the sequence is GQSGSGKS. N542 carries an N-linked (GlcNAc...) asparagine glycan. The interval 593–616 is disordered; sequence QEGSKEEATESERPETSLDVERSG. Residues 594-616 are compositionally biased toward basic and acidic residues; that stretch reads EGSKEEATESERPETSLDVERSG. N631 and N653 each carry an N-linked (GlcNAc...) asparagine glycan. A run of 6 helical transmembrane segments spans residues 685–705, 725–745, 785–805, 806–826, 902–922, and 927–947; these read VLVL…IFGL, SHFW…MIPV, SLVG…TTGL, IIAF…SPFI, FSFF…AGLI, and ATFG…IGVS. Residues 686-958 enclose the ABC transmembrane type-1 2 domain; it reads LVLGSIAAMV…TSAMAPDSNK (273 aa). The 238-residue stretch at 993-1230 folds into the ABC transporter 2 domain; sequence IEFRHVSFRY…SGGAYASLVT (238 aa). Residue 1028–1035 participates in ATP binding; that stretch reads GESGSGKS. N1082 and N1181 each carry an N-linked (GlcNAc...) asparagine glycan.

Belongs to the ABC transporter superfamily. ABCB family. Multidrug resistance exporter (TC 3.A.1.201) subfamily.

It is found in the membrane. The polypeptide is ABC transporter B family member 9 (ABCB9) (Arabidopsis thaliana (Mouse-ear cress)).